The following is a 185-amino-acid chain: Protein LPA2 (185 aa).

Residues 1-46 (MALQIHSPCSFSTRPYHLFFTTRNPRFAIKCQNSQIESDTTEDPSR) constitute a chloroplast transit peptide. The interval 35–105 (QIESDTTEDP…VFMSEEGAAK (71 aa)) is disordered. A compositionally biased stretch (low complexity) spans 47–75 (SKNSSSSGVGFGSPASSSSPAKKLSAATS). A compositionally biased stretch (basic and acidic residues) spans 83-92 (KREVNRRAPV). Transmembrane regions (helical) follow at residues 115–135 (AFLLTWLGLGIVILIEGIILA) and 152–172 (VYPVFTPSVVLFVAGTTAYGV).

The protein resides in the plastid. It is found in the chloroplast membrane. In Arabidopsis thaliana (Mouse-ear cress), this protein is Protein LPA2.